Consider the following 876-residue polypeptide: Probable LRR receptor-like protein kinase At1g51890 (876 aa).

The N-terminal stretch at 1–19 is a signal peptide; sequence MRFLSFLIFVFAVLGLVQA. The Extracellular segment spans residues 20 to 500; the sequence is QDQSGFISLD…TGKNSTNVVA (481 aa). Residues N45, N90, N138, N177, N251, N259, N284, N290, N327, N335, N397, N412, and N417 are each glycosylated (N-linked (GlcNAc...) asparagine). LRR repeat units lie at residues 407 to 430, 431 to 453, and 455 to 476; these read QIIS…SKLT, HLRE…FSDM, and NLTL…ETLQ. N-linked (GlcNAc...) asparagine glycosylation is found at N455, N460, N468, N481, and N494. Residues 501–521 traverse the membrane as a helical segment; it reads IAASVASVFAVLVILAIVFVV. The Cytoplasmic segment spans residues 522–872; sequence IRKKQRTNEA…FSPSSASDFS (351 aa). T561 carries the phosphothreonine modification. The region spanning 570-842 is the Protein kinase domain; the sequence is KNFERVLGKG…HVVMELNECL (273 aa). ATP is bound by residues 576–584 and K597; that span reads LGKGGFGTV. Y642 bears the Phosphotyrosine mark. Residue D694 is the Proton acceptor of the active site. 2 positions are modified to phosphothreonine: T729 and T734. At Y742 the chain carries Phosphotyrosine.

The protein belongs to the protein kinase superfamily. Ser/Thr protein kinase family.

The protein resides in the cell membrane. The enzyme catalyses L-seryl-[protein] + ATP = O-phospho-L-seryl-[protein] + ADP + H(+). The catalysed reaction is L-threonyl-[protein] + ATP = O-phospho-L-threonyl-[protein] + ADP + H(+). This is Probable LRR receptor-like protein kinase At1g51890 from Arabidopsis thaliana (Mouse-ear cress).